The chain runs to 494 residues: Glutamyl-tRNA(Gln) amidotransferase subunit A (494 aa).

Residues K79 and S154 each act as charge relay system in the active site. The Acyl-ester intermediate role is filled by S178.

The protein belongs to the amidase family. GatA subfamily. As to quaternary structure, heterotrimer of A, B and C subunits.

It carries out the reaction L-glutamyl-tRNA(Gln) + L-glutamine + ATP + H2O = L-glutaminyl-tRNA(Gln) + L-glutamate + ADP + phosphate + H(+). Its function is as follows. Allows the formation of correctly charged Gln-tRNA(Gln) through the transamidation of misacylated Glu-tRNA(Gln) in organisms which lack glutaminyl-tRNA synthetase. The reaction takes place in the presence of glutamine and ATP through an activated gamma-phospho-Glu-tRNA(Gln). This is Glutamyl-tRNA(Gln) amidotransferase subunit A from Clostridium kluyveri (strain NBRC 12016).